The primary structure comprises 422 residues: Keratin, type II cytoskeletal 80 (422 aa).

Residues 1–82 are head; sequence MACRSCVVGF…DPAIQQQKNN (82 aa). Phosphoserine is present on S45. A coil 1A region spans residues 83–118; the sequence is EKEEMKVLNDKFASLIGKVQALEQRNQLLETRWHFL. The IF rod domain maps to 83-394; the sequence is EKEEMKVLND…KLMEGEESRM (312 aa). Residues 119–135 form a linker 1 region; it reads QSQDSATFDLGHLYEEY. Residues 136–227 are coil 1B; that stretch reads QGRLQEELRK…SIYEQELKDL (92 aa). The interval 228–251 is linker 12; sequence AAQLKDVSVTVGMDSRCHIDLSGI. Residues 252-390 are coil 2; that stretch reads VEEVKAQYDA…ATYRKLMEGE (139 aa). The tract at residues 391–422 is tail; the sequence is ESRMDMPSATVVSAVQARCRTAPTLPHPLCSL.

The protein belongs to the intermediate filament family. As to quaternary structure, heterotetramer of two type I and two type II keratins.

The chain is Keratin, type II cytoskeletal 80 (KRT80) from Bos taurus (Bovine).